A 476-amino-acid chain; its full sequence is UDP-N-acetylmuramate--L-alanine ligase (476 aa).

123 to 129 (GTHGKTT) lines the ATP pocket.

It belongs to the MurCDEF family.

The protein localises to the cytoplasm. It carries out the reaction UDP-N-acetyl-alpha-D-muramate + L-alanine + ATP = UDP-N-acetyl-alpha-D-muramoyl-L-alanine + ADP + phosphate + H(+). The protein operates within cell wall biogenesis; peptidoglycan biosynthesis. Its function is as follows. Cell wall formation. The polypeptide is UDP-N-acetylmuramate--L-alanine ligase (Nitrosococcus oceani (strain ATCC 19707 / BCRC 17464 / JCM 30415 / NCIMB 11848 / C-107)).